The primary structure comprises 122 residues: Large ribosomal subunit protein uL14 (122 aa).

It belongs to the universal ribosomal protein uL14 family. In terms of assembly, part of the 50S ribosomal subunit. Forms a cluster with proteins L3 and L19. In the 70S ribosome, L14 and L19 interact and together make contacts with the 16S rRNA in bridges B5 and B8.

Its function is as follows. Binds to 23S rRNA. Forms part of two intersubunit bridges in the 70S ribosome. This is Large ribosomal subunit protein uL14 from Phenylobacterium zucineum (strain HLK1).